The primary structure comprises 309 residues: Ferrochelatase (309 aa).

His-185 and Glu-262 together coordinate Fe cation.

It belongs to the ferrochelatase family.

Its subcellular location is the cytoplasm. The catalysed reaction is heme b + 2 H(+) = protoporphyrin IX + Fe(2+). It functions in the pathway porphyrin-containing compound metabolism; protoheme biosynthesis; protoheme from protoporphyrin-IX: step 1/1. Its function is as follows. Catalyzes the ferrous insertion into protoporphyrin IX. The protein is Ferrochelatase of Campylobacter jejuni subsp. jejuni serotype O:6 (strain 81116 / NCTC 11828).